Here is a 66-residue protein sequence, read N- to C-terminus: MKANEIRDLATSEIELKVKSLKEELFNLRFQLATGQLENTARIREVRKAIARMKTVIREREISANN.

This sequence belongs to the universal ribosomal protein uL29 family.

The chain is Large ribosomal subunit protein uL29 from Lysinibacillus sphaericus (strain C3-41).